Reading from the N-terminus, the 311-residue chain is Nuclear hormone receptor family member nhr-111 (311 aa).

The segment at residues Ile39–Pro115 is a DNA-binding region (nuclear receptor). NR C4-type zinc fingers lie at residues Cys42–Cys62 and Cys78–Cys98. An NR LBD domain is found at Glu116 to Leu311.

The protein belongs to the nuclear hormone receptor family.

It is found in the nucleus. Functionally, orphan nuclear receptor. In Caenorhabditis elegans, this protein is Nuclear hormone receptor family member nhr-111 (nhr-111).